A 128-amino-acid chain; its full sequence is Large ribosomal subunit protein uL22 (128 aa).

It belongs to the universal ribosomal protein uL22 family. As to quaternary structure, part of the 50S ribosomal subunit.

This protein binds specifically to 23S rRNA; its binding is stimulated by other ribosomal proteins, e.g. L4, L17, and L20. It is important during the early stages of 50S assembly. It makes multiple contacts with different domains of the 23S rRNA in the assembled 50S subunit and ribosome. In terms of biological role, the globular domain of the protein is located near the polypeptide exit tunnel on the outside of the subunit, while an extended beta-hairpin is found that lines the wall of the exit tunnel in the center of the 70S ribosome. This chain is Large ribosomal subunit protein uL22, found in Methylobacterium radiotolerans (strain ATCC 27329 / DSM 1819 / JCM 2831 / NBRC 15690 / NCIMB 10815 / 0-1).